We begin with the raw amino-acid sequence, 99 residues long: Large ribosomal subunit protein uL23 (99 aa).

In terms of assembly, contacts protein L29, and trigger factor when it is bound to the ribosome. Part of the 50S ribosomal subunit.

In terms of biological role, one of the early assembly proteins it binds 23S rRNA. One of the proteins that surrounds the polypeptide exit tunnel on the outside of the ribosome. Forms the main docking site for trigger factor binding to the ribosome. The polypeptide is Large ribosomal subunit protein uL23 (Rhodopseudomonas palustris (strain ATCC BAA-98 / CGA009)).